The primary structure comprises 118 residues: Putative membrane protein insertion efficiency factor (118 aa).

It belongs to the UPF0161 family.

The protein resides in the cell inner membrane. Functionally, could be involved in insertion of integral membrane proteins into the membrane. The polypeptide is Putative membrane protein insertion efficiency factor (Helicobacter pylori (strain P12)).